Reading from the N-terminus, the 136-residue chain is Transcription antitermination protein NusB (136 aa).

This sequence belongs to the NusB family.

Involved in transcription antitermination. Required for transcription of ribosomal RNA (rRNA) genes. Binds specifically to the boxA antiterminator sequence of the ribosomal RNA (rrn) operons. In Arthrobacter sp. (strain FB24), this protein is Transcription antitermination protein NusB.